Consider the following 175-residue polypeptide: ATP-dependent protease subunit HslV (175 aa).

T2 is an active-site residue. G158, C161, and T164 together coordinate Na(+).

Belongs to the peptidase T1B family. HslV subfamily. In terms of assembly, a double ring-shaped homohexamer of HslV is capped on each side by a ring-shaped HslU homohexamer. The assembly of the HslU/HslV complex is dependent on binding of ATP.

Its subcellular location is the cytoplasm. It catalyses the reaction ATP-dependent cleavage of peptide bonds with broad specificity.. Its activity is regulated as follows. Allosterically activated by HslU binding. In terms of biological role, protease subunit of a proteasome-like degradation complex believed to be a general protein degrading machinery. The polypeptide is ATP-dependent protease subunit HslV (Haemophilus influenzae (strain PittEE)).